Reading from the N-terminus, the 116-residue chain is Protein RALF-like 33 (116 aa).

The signal sequence occupies residues 1–23 (MRGLSTKPVAIIIAILTVHFLFA). A propeptide spans 24–67 (AVTSQSSGDFVPIESKCNGTIAECSLSTAEEEFEMDSEINRRIL) (removed in mature form). Asn41 carries an N-linked (GlcNAc...) asparagine glycan. Intrachain disulfides connect Cys85-Cys95 and Cys108-Cys114.

This sequence belongs to the plant rapid alkalinization factor (RALF) family. Proteolytically cleaved, probably by S1P, a subtilisin-like serine protease (subtilase). Expressed in roots, stems, leaves and plants.

The protein localises to the secreted. In terms of biological role, cell signaling peptide that may regulate plant stress, growth, and development. Mediates a rapid alkalinization of extracellular space by mediating a transient increase in the cytoplasmic Ca(2+) concentration leading to a calcium-dependent signaling events through a cell surface receptor and a concomitant activation of some intracellular mitogen-activated protein kinases. This is Protein RALF-like 33 (RALFL33) from Arabidopsis thaliana (Mouse-ear cress).